Here is a 223-residue protein sequence, read N- to C-terminus: Deoxyribose-phosphate aldolase (223 aa).

Residue Asp-92 is the Proton donor/acceptor of the active site. The Schiff-base intermediate with acetaldehyde role is filled by Lys-153. Lys-182 functions as the Proton donor/acceptor in the catalytic mechanism.

It belongs to the DeoC/FbaB aldolase family. DeoC type 1 subfamily.

It is found in the cytoplasm. It carries out the reaction 2-deoxy-D-ribose 5-phosphate = D-glyceraldehyde 3-phosphate + acetaldehyde. The protein operates within carbohydrate degradation; 2-deoxy-D-ribose 1-phosphate degradation; D-glyceraldehyde 3-phosphate and acetaldehyde from 2-deoxy-alpha-D-ribose 1-phosphate: step 2/2. Functionally, catalyzes a reversible aldol reaction between acetaldehyde and D-glyceraldehyde 3-phosphate to generate 2-deoxy-D-ribose 5-phosphate. The chain is Deoxyribose-phosphate aldolase from Mycoplasmoides gallisepticum (strain R(low / passage 15 / clone 2)) (Mycoplasma gallisepticum).